Reading from the N-terminus, the 243-residue chain is LexA repressor (243 aa).

Residues 1–30 form a disordered region; it reads MSDDTGEFTDGSTESPADADGAGRRRAVDN. Residues 21–30 are compositionally biased toward basic and acidic residues; that stretch reads GAGRRRAVDN. A DNA-binding region (H-T-H motif) is located at residues 56–76; sequence IREIGDAVGLTSTSSVAHQLR. Residues S167 and K204 each act as for autocatalytic cleavage activity in the active site.

This sequence belongs to the peptidase S24 family. In terms of assembly, homodimer.

It catalyses the reaction Hydrolysis of Ala-|-Gly bond in repressor LexA.. Its function is as follows. Represses a number of genes involved in the response to DNA damage (SOS response), including recA and lexA. In the presence of single-stranded DNA, RecA interacts with LexA causing an autocatalytic cleavage which disrupts the DNA-binding part of LexA, leading to derepression of the SOS regulon and eventually DNA repair. This chain is LexA repressor, found in Mycolicibacterium smegmatis (strain ATCC 700084 / mc(2)155) (Mycobacterium smegmatis).